A 202-amino-acid polypeptide reads, in one-letter code: B-cell CLL/lymphoma 7 protein family member B (202 aa).

Positions 53-202 are disordered; sequence DSKEKEKSKS…PVVPQTTSES (150 aa). Residues 90–99 are compositionally biased toward polar residues; sequence ENSNQSSVSD. The segment covering 107–123 has biased composition (low complexity); the sequence is SSTNSSPSPQQSESLSP. Phosphoserine is present on residues Ser114, Ser118, Ser120, Ser122, Ser127, Ser148, and Ser152.

The protein belongs to the BCL7 family.

Its function is as follows. Positive regulator of apoptosis. Plays a role in the Wnt signaling pathway, negatively regulating the expression of Wnt signaling components CTNNB1 and HMGA1. Involved in cell cycle progression, maintenance of the nuclear structure and stem cell differentiation. May play a role in lung tumor development or progression. This is B-cell CLL/lymphoma 7 protein family member B (Bcl7b) from Mus musculus (Mouse).